The chain runs to 199 residues: Probable GTP-binding protein EngB (199 aa).

Positions 28–199 (DLPEIALAGR…DSWDAILEQV (172 aa)) constitute an EngB-type G domain. Residues 36–43 (GRSNVGKS), 63–67 (GKTQL), 81–84 (DVPG), 148–151 (TKAD), and 180–182 (FSS) each bind GTP. Mg(2+) is bound by residues serine 43 and threonine 65.

This sequence belongs to the TRAFAC class TrmE-Era-EngA-EngB-Septin-like GTPase superfamily. EngB GTPase family. Mg(2+) serves as cofactor.

Its function is as follows. Necessary for normal cell division and for the maintenance of normal septation. This chain is Probable GTP-binding protein EngB, found in Streptococcus pyogenes serotype M1.